The sequence spans 75 residues: uncharacterized protein (75 aa).

The protein belongs to the HSBP1 family.

This is an uncharacterized protein from Schizosaccharomyces pombe (strain 972 / ATCC 24843) (Fission yeast).